The following is a 235-amino-acid chain: Large ribosomal subunit protein uL1 (235 aa).

It belongs to the universal ribosomal protein uL1 family. As to quaternary structure, part of the 50S ribosomal subunit.

In terms of biological role, binds directly to 23S rRNA. The L1 stalk is quite mobile in the ribosome, and is involved in E site tRNA release. Functionally, protein L1 is also a translational repressor protein, it controls the translation of the L11 operon by binding to its mRNA. The polypeptide is Large ribosomal subunit protein uL1 (Mycolicibacterium paratuberculosis (strain ATCC BAA-968 / K-10) (Mycobacterium paratuberculosis)).